Here is a 293-residue protein sequence, read N- to C-terminus: Bifunctional protein FolD (293 aa).

NADP(+)-binding positions include 164 to 166 (GRS), Ser-193, and Thr-234.

The protein belongs to the tetrahydrofolate dehydrogenase/cyclohydrolase family. In terms of assembly, homodimer.

The catalysed reaction is (6R)-5,10-methylene-5,6,7,8-tetrahydrofolate + NADP(+) = (6R)-5,10-methenyltetrahydrofolate + NADPH. It carries out the reaction (6R)-5,10-methenyltetrahydrofolate + H2O = (6R)-10-formyltetrahydrofolate + H(+). It participates in one-carbon metabolism; tetrahydrofolate interconversion. Its function is as follows. Catalyzes the oxidation of 5,10-methylenetetrahydrofolate to 5,10-methenyltetrahydrofolate and then the hydrolysis of 5,10-methenyltetrahydrofolate to 10-formyltetrahydrofolate. In Bacteroides fragilis (strain ATCC 25285 / DSM 2151 / CCUG 4856 / JCM 11019 / LMG 10263 / NCTC 9343 / Onslow / VPI 2553 / EN-2), this protein is Bifunctional protein FolD.